A 102-amino-acid chain; its full sequence is Small ribosomal subunit protein uS10 (102 aa).

This sequence belongs to the universal ribosomal protein uS10 family. As to quaternary structure, part of the 30S ribosomal subunit.

Involved in the binding of tRNA to the ribosomes. The protein is Small ribosomal subunit protein uS10 of Bifidobacterium animalis subsp. lactis (strain AD011).